A 162-amino-acid polypeptide reads, in one-letter code: Peptidyl-prolyl cis-trans isomerase (162 aa).

The PPIase cyclophilin-type domain occupies 16 to 162 (KTAYATIKTN…IESVVFSPSL (147 aa)).

Belongs to the cyclophilin-type PPIase family.

It carries out the reaction [protein]-peptidylproline (omega=180) = [protein]-peptidylproline (omega=0). In terms of biological role, PPIases accelerate the folding of proteins. It catalyzes the cis-trans isomerization of proline imidic peptide bonds in oligopeptides. The protein is Peptidyl-prolyl cis-trans isomerase (ppiA) of Helicobacter pylori (strain J99 / ATCC 700824) (Campylobacter pylori J99).